Consider the following 402-residue polypeptide: MSVAFASARPRGKGEVTQQTIQKMLDENHHLIQCILDYQSKGKTAECTQYQQILHRNLVYLATIADSNQNMQSLLPAPPTQNMNLGPGALSQSGSSQGLHPQGSLSDTVSTGLPPASLMQGQIGNGPNHVSMQQTAQSTLPTTSMSLSGSGHGTGPGYSHSGPTSQSVPMQGQGAISNYVSRTNINMQSNPVSMMHQQAATSHYNSAQGGSQHYQGQAPIAMMGQGGQGGSMMGQRPMAPYRPSQQGSSQQYLGQEEYYSEQYSHSQGSAEPMSQQYYPDGHGDYAYQQSSYTEQSYDRSFEDPTQHYYEGGNSQYSQQQAGYQQGTAQQQTYSQQQYPNQQSYPGQQQGYGPAQGAPSQYSSYQQGQGQQYGSYRTSQTGPSAQQQRPYGYEQGQYGNYQQ.

An N-terminal auto-inhibitory domain; necessary for interaction with SMARCA4/BRG1 region spans residues Met1–Ser148. Residues Tyr50–Ile53 carry the SH2-binding motif. 2 disordered regions span residues Gln72 to Gln171 and Ala221 to Gln402. The span at Leu85–Ser106 shows a compositional bias: low complexity. Polar residues-rich tracts occupy residues Asn128–Gly149 and Ser161–Gln171. A methionine-rich intra-molecular domain region spans residues Gly149–Met238. A compositionally biased stretch (low complexity) spans Met233–Gln251. Residues Tyr252–Tyr323 form an MFD domain region. Residues Glu261–Tyr277 are compositionally biased toward polar residues. Residues Ser296–Thr305 show a composition bias toward basic and acidic residues. Over residues Gly311–Tyr375 the composition is skewed to low complexity. The tract at residues Asn340–Gln402 is necessary for nuclear localization. The SH2-binding signature appears at Ser359–Ser362. Polar residues predominate over residues Arg376–Arg388. The short motif at Thr377 to Gln385 is the SH3-binding element. Residues Tyr390 to Gln402 are compositionally biased toward low complexity. The interval Glu393–Gln402 is necessary for interaction with CREBBP and for the recruitment of CREBBP to the nuclear bodies. The SH2-binding motif lies at Tyr397–Tyr400.

The protein belongs to the SS18 family. In terms of assembly, homodimer. Dimerization may be necessary for its function in neuronal dendritic development. Interacts (via C-terminus) with CREBBP (via N-terminus), EP300 and SMARCA4/BRG1. Interacts with the nBAF complex. Association with CREBBP facilitates transcription while the association with SMARCA4/BRG1 suppresses CREST-mediated transcription in resting neurons.

It is found in the nucleus. The protein localises to the chromosome. The protein resides in the centromere. It localises to the kinetochore. Its function is as follows. Transcriptional activator which is required for calcium-dependent dendritic growth and branching in cortical neurons. Recruits CREB-binding protein (CREBBP) to nuclear bodies. Component of the CREST-BRG1 complex, a multiprotein complex that regulates promoter activation by orchestrating a calcium-dependent release of a repressor complex and a recruitment of an activator complex. In resting neurons, transcription of the c-FOS promoter is inhibited by BRG1-dependent recruitment of a phospho-RB1-HDAC1 repressor complex. Upon calcium influx, RB1 is dephosphorylated by calcineurin, which leads to release of the repressor complex. At the same time, there is increased recruitment of CREBBP to the promoter by a CREST-dependent mechanism, which leads to transcriptional activation. The CREST-BRG1 complex also binds to the NR2B promoter, and activity-dependent induction of NR2B expression involves a release of HDAC1 and recruitment of CREBBP. The polypeptide is Calcium-responsive transactivator (Ss18l1) (Mus musculus (Mouse)).